The following is a 349-amino-acid chain: MDIKGALNRIVNQLDLTTEEMQAVMRQIMTGQCTDAQIGAFLMGMRMKSETIDEIVGAVAVMRELADGVQLPTLKHVVDVVGTGGDGANIFNVSSAASFVVAAAGGKVAKHGNRAVSGKSGSADLLEAAGIYLELTSEQVARCIDTVGVGFMFAQVHHKAMKYAAGPRRELGLRTLFNMLGPLTNPAGVRHQVVGVFTQELCKPLAEVLKRLGSEHVLVVHSRDGLDEFSLAAATHIAELKDGEVREYEVRPEDFGIKSQTLMGLEVDSPQASLELIRDALGRRKTEAGQKAAELIVMNAGPALYAADLATSLHEGIQLAHDALHTGLAREKMDELVAFTAVYREENAQ.

5-phospho-alpha-D-ribose 1-diphosphate contacts are provided by residues G82, G85–D86, N92–S95, K110–G118, and S122. G82 lines the anthranilate pocket. A Mg(2+)-binding site is contributed by S94. Residue N113 coordinates anthranilate. Residue R168 coordinates anthranilate. Mg(2+)-binding residues include D227 and E228.

Belongs to the anthranilate phosphoribosyltransferase family. Homodimer. Mg(2+) serves as cofactor.

The catalysed reaction is N-(5-phospho-beta-D-ribosyl)anthranilate + diphosphate = 5-phospho-alpha-D-ribose 1-diphosphate + anthranilate. It participates in amino-acid biosynthesis; L-tryptophan biosynthesis; L-tryptophan from chorismate: step 2/5. Its function is as follows. Catalyzes the transfer of the phosphoribosyl group of 5-phosphorylribose-1-pyrophosphate (PRPP) to anthranilate to yield N-(5'-phosphoribosyl)-anthranilate (PRA). The chain is Anthranilate phosphoribosyltransferase from Pseudomonas aeruginosa (strain LESB58).